The chain runs to 87 residues: UPF0473 protein PTH_1066 (87 aa).

The protein belongs to the UPF0473 family.

The polypeptide is UPF0473 protein PTH_1066 (Pelotomaculum thermopropionicum (strain DSM 13744 / JCM 10971 / SI)).